A 715-amino-acid polypeptide reads, in one-letter code: Lactococcin-A transport/processing ATP-binding protein LcnC (715 aa).

Residues 11–138 (QVDEMDCGCA…SEWTGISLFL (128 aa)) form the Peptidase C39 domain. The active site involves Cys17. 6 helical membrane passes run 167 to 187 (VILNIVIASFIVTLINILGSY), 197 to 217 (IPNALMGTLGIISVGLLLTYI), 237 to 257 (LAIDVILSYIRHIFQLPMSFF), 282 to 302 (TILSLFLDLTIVVMTGLILGL), 307 to 327 (LFLLVLLAIPLYIVVIIIFTP), and 396 to 416 (AIIQLTLSVTILWFGATLVIS). In terms of domain architecture, ABC transmembrane type-1 spans 168-450 (ILNIVIASFI…IINLQTKLQK (283 aa)). The ABC transporter domain maps to 482–715 (LNMSDISYQY…NGFYEQLYHN (234 aa)). Residue 515-522 (GMSGSGKS) coordinates ATP.

This sequence belongs to the ABC transporter superfamily. Bacteriocin (lactococcin) exporter (TC 3.A.1.112.3) family.

It localises to the cell membrane. In terms of biological role, involved in the export process of the bacteriocin lactococcin A. The polypeptide is Lactococcin-A transport/processing ATP-binding protein LcnC (lcnC) (Lactococcus lactis subsp. lactis (Streptococcus lactis)).